A 257-amino-acid chain; its full sequence is UPF0246 protein YaaA (257 aa).

Belongs to the UPF0246 family.

This chain is UPF0246 protein YaaA, found in Salmonella typhi.